The following is an 856-amino-acid chain: Leucine--tRNA ligase (856 aa).

Positions 42 to 52 match the 'HIGH' region motif; sequence PYPSGNLHMGH. Residues 617-621 carry the 'KMSKS' region motif; the sequence is KMSKS. Lysine 620 contributes to the ATP binding site.

This sequence belongs to the class-I aminoacyl-tRNA synthetase family.

The protein resides in the cytoplasm. It carries out the reaction tRNA(Leu) + L-leucine + ATP = L-leucyl-tRNA(Leu) + AMP + diphosphate. This chain is Leucine--tRNA ligase, found in Rippkaea orientalis (strain PCC 8801 / RF-1) (Cyanothece sp. (strain PCC 8801)).